Here is a 204-residue protein sequence, read N- to C-terminus: Dihydroorotase (204 aa).

Position 34 (His-34) interacts with Zn(2+). Position 79 (Leu-79) interacts with substrate. Asp-107 provides a ligand contact to Zn(2+). The active site involves Asp-107. Residues His-111 and Ala-123 each coordinate substrate.

This sequence belongs to the metallo-dependent hydrolases superfamily. DHOase family. Class II DHOase subfamily. As to quaternary structure, homodimer. It depends on Zn(2+) as a cofactor.

It carries out the reaction (S)-dihydroorotate + H2O = N-carbamoyl-L-aspartate + H(+). Its pathway is pyrimidine metabolism; UMP biosynthesis via de novo pathway; (S)-dihydroorotate from bicarbonate: step 3/3. Its function is as follows. Catalyzes the reversible cyclization of carbamoyl aspartate to dihydroorotate. The polypeptide is Dihydroorotase (Serratia marcescens).